The primary structure comprises 452 residues: Protein EARLY-RESPONSIVE TO DEHYDRATION 7, chloroplastic (452 aa).

Residues 1 to 18 are compositionally biased toward polar residues; that stretch reads MESSGDKQTSSLYPTVDT. A chloroplast-targeting transit peptide spans 1-28; that stretch reads MESSGDKQTSSLYPTVDTSNPEAPINPS. Positions 1–37 are disordered; sequence MESSGDKQTSSLYPTVDTSNPEAPINPSSSSSTNNLY. Positions 19-37 are enriched in low complexity; sequence SNPEAPINPSSSSSTNNLY. Residues 258–426 form the Senescence domain; sequence IATGSGHLIK…AWVAFKIRKA (169 aa).

It is found in the plastid. The protein resides in the chloroplast. This is Protein EARLY-RESPONSIVE TO DEHYDRATION 7, chloroplastic from Arabidopsis thaliana (Mouse-ear cress).